Reading from the N-terminus, the 324-residue chain is Beta-ketoacyl-[acyl-carrier-protein] synthase III (324 aa).

Catalysis depends on residues Cys-112 and His-249. The interval 250 to 254 is ACP-binding; that stretch reads QANRR. Asn-279 is a catalytic residue.

The protein belongs to the thiolase-like superfamily. FabH family. In terms of assembly, homodimer.

It localises to the cytoplasm. It carries out the reaction malonyl-[ACP] + acetyl-CoA + H(+) = 3-oxobutanoyl-[ACP] + CO2 + CoA. It participates in lipid metabolism; fatty acid biosynthesis. Its function is as follows. Catalyzes the condensation reaction of fatty acid synthesis by the addition to an acyl acceptor of two carbons from malonyl-ACP. Catalyzes the first condensation reaction which initiates fatty acid synthesis and may therefore play a role in governing the total rate of fatty acid production. Possesses both acetoacetyl-ACP synthase and acetyl transacylase activities. Its substrate specificity determines the biosynthesis of branched-chain and/or straight-chain of fatty acids. The sequence is that of Beta-ketoacyl-[acyl-carrier-protein] synthase III from Streptococcus equi subsp. equi (strain 4047).